The following is a 168-amino-acid chain: Protein-export protein SecB (168 aa).

This sequence belongs to the SecB family. Homotetramer, a dimer of dimers. One homotetramer interacts with 1 SecA dimer.

It is found in the cytoplasm. Functionally, one of the proteins required for the normal export of preproteins out of the cell cytoplasm. It is a molecular chaperone that binds to a subset of precursor proteins, maintaining them in a translocation-competent state. It also specifically binds to its receptor SecA. The chain is Protein-export protein SecB from Glaesserella parasuis serovar 5 (strain SH0165) (Haemophilus parasuis).